Consider the following 42-residue polypeptide: Delta-hexatoxin-Hv1a (42 aa).

4 disulfides stabilise this stretch: cysteine 1/cysteine 15, cysteine 8/cysteine 20, cysteine 14/cysteine 31, and cysteine 16/cysteine 42.

The protein belongs to the neurotoxin 06 (delta-actx) family. Expressed by the venom gland.

It localises to the secreted. Inhibits tetrodotoxin-sensitive voltage-gated sodium channels (Nav) by binding to site 3. Slows the inactivation, and causes a prolongation of action potential duration resulting in repetitive firing in autonomic and motor nerve fibers. Does not depolarize the resting potential. Does not affect tetrodotoxin-resistant sodium channels. This lethal neurotoxin is active on both insect and mammalian voltage-gated sodium channels. Pan-neuronal expression in Drosophila is lethal but flies engineered to express the toxin only in pacemaker neurons have profound defects in circadian rhythm but a normal lifespan. This Hadronyche versuta (Blue mountains funnel-web spider) protein is Delta-hexatoxin-Hv1a.